The primary structure comprises 484 residues: MASPFFFVFLLSALSLENTYASPNYREALSKSLLFFQGQRSGRLPSDQQLSWRSSSGLSDGSSAHVDLTGGYYDAGDNVKFNFPMAFTTTMLSWSSLEYGKKMGPELQNSRVAIRWATDYLLKCARATPGKLYVGVGDPNGDHKCWERPEDMDTPRTVYSVSPSNPGSDVAAETAAALAASSMVFRKVDPKYSRLLLATAKKVMQFAIQYRGAYSNSLSSSVCPFYCSYSGYKDELLWGAAWLHRATNDPYYTNFIKSLGGGDQPDIFSWDNKYAGAYVLLSRRAVLNKDNNFELYKQAAENFMCKILPNSPSSSTKYTKGGLMYKLPQSNLQYVTSITFLLTTYAKYMKSTKQTFNCGNSLIVPNALINLSKRQVDYVLGVNPMKMSYMVGFSSNFPKRIHHRGSSLPSRAVRSNSLGCNGGFQSFRTQNPNPNILTGAIVGGPNQNDEYPDQRDDYTRSEPATYINAAFVGPLAYFAASRSP.

The signal sequence occupies residues 1-21; that stretch reads MASPFFFVFLLSALSLENTYA. Asp-77 serves as the catalytic Nucleophile. An N-linked (GlcNAc...) asparagine glycan is attached at Asn-370. Residues His-402, Asp-453, and Glu-462 contribute to the active site.

This sequence belongs to the glycosyl hydrolase 9 (cellulase E) family. Specifically expressed in root cap cells.

It is found in the secreted. The catalysed reaction is Endohydrolysis of (1-&gt;4)-beta-D-glucosidic linkages in cellulose, lichenin and cereal beta-D-glucans.. May be involved in the sloughing (cell-cell separation) of the root cap cells from root tip. The protein is Endoglucanase 3 (CEL5) of Arabidopsis thaliana (Mouse-ear cress).